We begin with the raw amino-acid sequence, 559 residues long: Aminopeptidase Q (559 aa).

At 1–13 (MSRPFSSGVYVSR) the chain is on the cytoplasmic side. Residues 14–34 (GVALLLAALTAVLLLVLVALA) form a helical; Signal-anchor for type II membrane protein membrane-spanning segment. Residues 35 to 559 (SLYGSCAHVQ…VPFRHFLAEH (525 aa)) lie on the Lumenal side of the membrane. Residues Asn-121 and Asn-129 are each glycosylated (N-linked (GlcNAc...) asparagine). Glu-237 lines the substrate pocket. Residues Asn-258, Asn-285, and Asn-343 are each glycosylated (N-linked (GlcNAc...) asparagine). Substrate is bound at residue 376–380 (GAMEN). His-412 serves as a coordination point for Zn(2+). Catalysis depends on Glu-413, which acts as the Proton acceptor. Positions 416 and 435 each coordinate Zn(2+).

It belongs to the peptidase M1 family. Homodimer. Zn(2+) serves as cofactor. Post-translationally, N-glycosylated.

It localises to the membrane. Inhibited by bestatin. Functionally, metalloprotease which may be important for placentation by regulating biological activity of key peptides at the embryo-maternal interface. On synthetic substrates it shows a marked preference for Leu-4-methylcoumaryl-7-amide (Leu-MCA) over Met-MCA, Arg-LCA and Lys-LCA. Cleaves the N-terminal amino acid of several peptides such as angiotensin-3, kisspeptin-10 and endokinin C. This Mus musculus (Mouse) protein is Aminopeptidase Q.